A 348-amino-acid polypeptide reads, in one-letter code: Phospho-2-dehydro-3-deoxyheptonate aldolase, Trp-sensitive (348 aa).

Belongs to the class-I DAHP synthase family.

It carries out the reaction D-erythrose 4-phosphate + phosphoenolpyruvate + H2O = 7-phospho-2-dehydro-3-deoxy-D-arabino-heptonate + phosphate. It participates in metabolic intermediate biosynthesis; chorismate biosynthesis; chorismate from D-erythrose 4-phosphate and phosphoenolpyruvate: step 1/7. Its function is as follows. Stereospecific condensation of phosphoenolpyruvate (PEP) and D-erythrose-4-phosphate (E4P) giving rise to 3-deoxy-D-arabino-heptulosonate-7-phosphate (DAHP). This chain is Phospho-2-dehydro-3-deoxyheptonate aldolase, Trp-sensitive (aroH), found in Enterobacter agglomerans (Erwinia herbicola).